The chain runs to 889 residues: Rho GTPase-activating protein 27 (889 aa).

The region spanning 6 to 69 (VGDVYVLVEH…PAQYVRELPA (64 aa)) is the SH3 domain. Positions 104–132 (AGPDGAPEESGGRASSLCGPAQRGAATQR) are disordered. 3 positions are modified to phosphoserine: serine 156, serine 216, and serine 249. 2 WW domains span residues 246 to 280 (PLPS…SPFE) and 299 to 333 (VSLE…DEAE). A compositionally biased stretch (acidic residues) spans 329–341 (EDEAENEPEEELE). The tract at residues 329–397 (EDEAENEPEE…SPLTTPPGWS (69 aa)) is disordered. Serine 347 is modified (phosphoserine). The span at 383 to 395 (EPGPTSPLTTPPG) shows a compositional bias: low complexity. Residues 411 to 444 (HFTQEQWVRLEDPHGKPYFYNPEDSSVRWELPQV) enclose the WW 3 domain. Positions 447 to 474 (PAPRSIHKSSQDGDTPAQASPPEEKVPA) are disordered. Serine 456 carries the post-translational modification Phosphoserine. Threonine 461 is subject to Phosphothreonine. A Phosphoserine modification is found at serine 466. Residues 496–612 (TLDKAGVLHR…WHKAIAQGIQ (117 aa)) enclose the PH domain. Positions 617–655 (ELPPEESESSRVDFGSSERLGSWQEKEEDARPNAAAPAL) are disordered. One can recognise a Rho-GAP domain in the interval 697–886 (CALAALCERE…LILQQCADIF (190 aa)).

Interacts with SH3KBP1/CIN85. As to expression, expressed in germinal center B-cell, spleen, chronic lymphocytic leukemia, pancreatic cancer and lung cancer.

The protein localises to the cytoplasm. Its subcellular location is the membrane. Its function is as follows. Rho GTPase-activating protein which may be involved in clathrin-mediated endocytosis. GTPase activators for the Rho-type GTPases act by converting them to an inactive GDP-bound state. Has activity toward CDC42 and RAC1. This Homo sapiens (Human) protein is Rho GTPase-activating protein 27.